Consider the following 101-residue polypeptide: Large ribosomal subunit protein uL24 (101 aa).

Belongs to the universal ribosomal protein uL24 family. Part of the 50S ribosomal subunit.

Functionally, one of two assembly initiator proteins, it binds directly to the 5'-end of the 23S rRNA, where it nucleates assembly of the 50S subunit. In terms of biological role, one of the proteins that surrounds the polypeptide exit tunnel on the outside of the subunit. The polypeptide is Large ribosomal subunit protein uL24 (Streptococcus pyogenes serotype M2 (strain MGAS10270)).